The primary structure comprises 181 residues: Large ribosomal subunit protein uL5 (181 aa).

It belongs to the universal ribosomal protein uL5 family. In terms of assembly, part of the 50S ribosomal subunit; part of the 5S rRNA/L5/L18/L25 subcomplex. Contacts the 5S rRNA and the P site tRNA. Forms a bridge to the 30S subunit in the 70S ribosome.

Functionally, this is one of the proteins that bind and probably mediate the attachment of the 5S RNA into the large ribosomal subunit, where it forms part of the central protuberance. In the 70S ribosome it contacts protein S13 of the 30S subunit (bridge B1b), connecting the 2 subunits; this bridge is implicated in subunit movement. Contacts the P site tRNA; the 5S rRNA and some of its associated proteins might help stabilize positioning of ribosome-bound tRNAs. The sequence is that of Large ribosomal subunit protein uL5 from Sulfurovum sp. (strain NBC37-1).